We begin with the raw amino-acid sequence, 473 residues long: Ribulose bisphosphate carboxylase large chain (473 aa).

Positions 1–2 (MS) are excised as a propeptide. The residue at position 3 (Pro3) is an N-acetylproline. Lys14 carries the post-translational modification N6,N6,N6-trimethyllysine. Substrate contacts are provided by Asn123 and Thr173. Catalysis depends on Lys175, which acts as the Proton acceptor. Lys177 contacts substrate. Residues Lys201, Asp203, and Glu204 each coordinate Mg(2+). An N6-carboxylysine modification is found at Lys201. The active-site Proton acceptor is His294. Substrate-binding residues include Arg295, His327, and Ser379.

The protein belongs to the RuBisCO large chain family. Type I subfamily. As to quaternary structure, heterohexadecamer of 8 large chains and 8 small chains; disulfide-linked. The disulfide link is formed within the large subunit homodimers. Mg(2+) is required as a cofactor. In terms of processing, the disulfide bond which can form in the large chain dimeric partners within the hexadecamer appears to be associated with oxidative stress and protein turnover.

The protein resides in the plastid. It is found in the chloroplast. The enzyme catalyses 2 (2R)-3-phosphoglycerate + 2 H(+) = D-ribulose 1,5-bisphosphate + CO2 + H2O. The catalysed reaction is D-ribulose 1,5-bisphosphate + O2 = 2-phosphoglycolate + (2R)-3-phosphoglycerate + 2 H(+). Its function is as follows. RuBisCO catalyzes two reactions: the carboxylation of D-ribulose 1,5-bisphosphate, the primary event in carbon dioxide fixation, as well as the oxidative fragmentation of the pentose substrate in the photorespiration process. Both reactions occur simultaneously and in competition at the same active site. The protein is Ribulose bisphosphate carboxylase large chain of Vigna unguiculata (Cowpea).